The primary structure comprises 1485 residues: Sex-determining transformer protein 2 (1485 aa).

The signal sequence occupies residues 1–28; it reads MSLRSNKLLVAAVIFTVVTFGLLLTSSI. The next 9 helical transmembrane spans lie at 438-458, 490-510, 584-604, 732-752, 923-943, 950-970, 980-1000, 1033-1053, and 1063-1083; these read VVYF…FFAW, IELN…NTYL, WPFI…FVDI, GILL…VMLI, LLAS…FSIT, LIFS…ISLF, DSAV…LSLF, AQVF…AGVV, and TVIL…VLVA. Residues 1131–1271 are interaction with fem-3; it reads DFHIRPTNMS…MLHMIEKVQK (141 aa). The interval 1143–1175 is disordered; sequence YAPPPAKKRAKQTNNETDPEKKEDEPGTSNANN. Residues 1181–1201 form a helical membrane-spanning segment; the sequence is AAHRLAILPWHFVLGGIPVDL. Disordered regions lie at residues 1228 to 1252, 1275 to 1306, and 1348 to 1384; these read SELE…PAPE, EKEA…PSHR, and EMPP…PPHP. Basic and acidic residues predominate over residues 1275–1284; sequence EKEAKEKVHQ. An MX regulatory domain; required for tra-1 binding region spans residues 1401–1422; the sequence is CEDVYWTYNDGRLPPNVAMPPR. Residues 1442–1485 form a disordered region; sequence PPGQPSIPIPAEAMALREERARAHREQEQRDNSQSPSPSPEPGL. The span at 1456 to 1472 shows a compositional bias: basic and acidic residues; sequence ALREERARAHREQEQRD.

Interacts with tra-1 and fem-3. As to expression, somatic and germline tissues.

The protein resides in the membrane. In terms of biological role, plays a major role in controlling sexual cell fates. Promotes female development in XX animals where it sequesters one or more of the FEM proteins to the membrane thereby freeing the tra-1 protein (a putative transcription factor) to enter the nucleus and promote female development. In XO animals it acts as a receptor for her-1 which prevents it from binding to FEM proteins thereby repressing the activity of tra-1. Negatively regulates male development when bound to fem-3 and is required together with tra-1 for promoting spermatogenesis. This Caenorhabditis remanei (Caenorhabditis vulgaris) protein is Sex-determining transformer protein 2.